Here is a 459-residue protein sequence, read N- to C-terminus: MTDPNTLAARFPGDFLFGVATASFQIEGSTKADGRKPSIWDAFCNMPGHVFGRHNGDIACDHYNRWEEDLDLIKEMGVEAYRFSLAWPRIIPDGFGPINEKGLDFYDRLVDGCKARGIKTYATLYHWDLPLTLMGDGGWASRSTAHAFQRYAKTVMARLGDRLDAVATFNEPWCAVWLSHLYGVHAPGERNMEAALAAMHHINLAHGFGVEASRHVAPKVPVGLVLNAHSAIPASDGEADLKAAERAFQFHNGAFFDPVFKGEYPAEMMEALGDRMPVVEAEDLGIISQKLDWWGLNYYTPMRVADDATPGVEFPATMPAPAVSDVKTDIGWEVYAPALHTLVETLYERYDLPECYITENGACYNMGVENGQVNDQPRLDYYAEHLGIVADLIRDGYPMRGYFAWSLMDNFEWAEGYRMRFGLVHVDYQTQVRTVKNSGKWYSALASGFPKGNHGVAKG.

Glu-171 acts as the Proton donor in catalysis. The Nucleophile role is filled by Glu-359.

Belongs to the glycosyl hydrolase 1 family.

It carries out the reaction Hydrolysis of terminal, non-reducing beta-D-glucosyl residues with release of beta-D-glucose.. The sequence is that of Beta-glucosidase (abg) from Agrobacterium sp. (strain ATCC 21400).